The sequence spans 316 residues: Phosducin-like protein 1 (316 aa).

The segment at 1–61 (MEQNILNSIL…EDGDKEYEVD (61 aa)) is disordered. The span at 12–41 (KFGDGDQERSDIRHNDSGDENDNHSDHEGN) shows a compositional bias: basic and acidic residues. Acidic residues predominate over residues 49–61 (EGNEDGDKEYEVD). The Phosducin domain maps to 95–290 (SDYAEHREKQ…LLSSYDIIPN (196 aa)). Residues 102–156 (EKQKQKYLQKKYETQKMLEKMCFTTRDQPPPTEEENQLDSDDDDLERIRKARMEQ) are a coiled coil. A thioredoxin fold region spans residues 175–316 (FGYFKQIDSS…RPESDDDNDD (142 aa)). A disordered region spans residues 293–316 (KAKNSNWETSLSRKRPESDDDNDD).

Belongs to the phosducin family.

It is found in the cytoplasm. Functionally, required for normal chemotaxis in response to cAMP and folate. Required for the heterodimerization of the G protein beta and gamma subunits gpbA and gpgA, which is itself thought to be necessary for prenylation of the gamma subunit gpgA and its association with plasma membranes. The polypeptide is Phosducin-like protein 1 (phlp1) (Dictyostelium discoideum (Social amoeba)).